A 275-amino-acid polypeptide reads, in one-letter code: Voltage-dependent calcium channel gamma-7 subunit (275 aa).

Transmembrane regions (helical) follow at residues 8 to 28 (ALTL…GIAV), 103 to 123 (FPMV…IGHI), 129 to 149 (ILAF…VVGL), and 179 to 199 (FAFA…SVYL). Residues Ser-222, Ser-225, and Ser-273 each carry the phosphoserine modification.

It belongs to the PMP-22/EMP/MP20 family. CACNG subfamily. In terms of assembly, interacts with CACNA1C. Identified in a complex with the L-type calcium channel subunits CACNA1C, CACNA2D1 and either CACNB1 or CACNB2. Acts as an auxiliary subunit for AMPA-selective glutamate receptors (AMPARs), such as GRIA1 and GRIA2. Detected in heart left ventricle. Widely expressed.

It localises to the cell membrane. Its function is as follows. Regulates the activity of L-type calcium channels that contain CACNA1C as pore-forming subunit. Regulates the trafficking and gating properties of AMPA-selective glutamate receptors (AMPARs). Promotes their targeting to the cell membrane and synapses and modulates their gating properties by slowing their rates of activation, deactivation and desensitization and by mediating their resensitization. Displays subunit-specific AMPA receptor regulation. Shows specificity only for GRIA1 and GRIA2. In Homo sapiens (Human), this protein is Voltage-dependent calcium channel gamma-7 subunit (CACNG7).